Here is a 246-residue protein sequence, read N- to C-terminus: ABC transporter ATP-binding protein NatA (246 aa).

The region spanning 2–237 is the ABC transporter domain; that stretch reads ITLTDCSRRF…ERSEDLNYIF (236 aa). 38-45 contacts ATP; the sequence is GENGAGKT.

Belongs to the ABC transporter superfamily. As to quaternary structure, the complex is composed of NatA and NatB.

It catalyses the reaction Na(+)(in) + ATP + H2O = Na(+)(out) + ADP + phosphate + H(+). Functionally, part of an ABC transporter that catalyzes ATP-dependent electrogenic sodium extrusion. The chain is ABC transporter ATP-binding protein NatA from Bacillus subtilis (strain 168).